The chain runs to 538 residues: MATSRDFGREPPRQQQDSDEAGHTLHDGCQHVSEHPQIDVTAHDSSASALPGDETTVGAATAALDPKEEERDPNIVDWDGPDDPANPQNWPPLKKWGNVAVLSIITFMVPLASSMFAPGIPQVLSDFDTNNPSLATFVVSVYILGLAAGPLVLAPMSELYGRVVIYHVGNVLFIIFTVACALSTNMNMLIAFRFLCGLVGAGPIAIGGGTIADLTTLQQRGTAMSVWSLGPLLGPSVGPVAGGFLSQAEGWRWIFWVLAITAGVITIAGLLVLRETHPGTLLERKTRRLRKETGNMNLRSKLDLQVAPRTLFLRSIVRPSKLLVLSPICLVLSVYSAFVYAMIYFMISTFTFVFQDNYGFSEGIVGLVYIALGLGMLFGVVVQQAIGNRIMKRLADKLNKGKPKPEYRIPPTLLAGFLIPTGLFIYGWTVQYHIQWAVPLLGALLAGMGICIINISTNLYLVDAFTLYAASALAASTVLRSIFGATFPLFALQMYETLGLGWGNSLLAFIAVAMFAIPPLLFYYGERLRSHPRFQVKL.

Composition is skewed to basic and acidic residues over residues 1–12, 20–35, and 65–74; these read MATSRDFGREPP, EAGH…VSEH, and DPKEEERDPN. Disordered stretches follow at residues 1–35 and 65–90; these read MATS…VSEH and DPKE…PQNW. 12 consecutive transmembrane segments (helical) span residues 100 to 120, 134 to 154, 163 to 183, 194 to 214, 225 to 245, 253 to 273, 327 to 347, 362 to 382, 409 to 429, 436 to 456, 482 to 502, and 505 to 525; these read AVLS…APGI, LATF…LVLA, VVIY…CALS, FLCG…IADL, SVWS…GGFL, WIFW…LLVL, PICL…YFMI, EGIV…GVVV, IPPT…YGWT, WAVP…INIS, IFGA…GLGW, and SLLA…FYYG.

It belongs to the major facilitator superfamily.

The protein localises to the cell membrane. Its function is as follows. Efflux pump that might be required for efficient secretion of radicicol or other secondary metabolies produced by the radicicol gene cluster. The chain is Efflux pump radE from Floropilus chiversii (Chaetomium chiversii).